We begin with the raw amino-acid sequence, 40 residues long: uncharacterized protein (40 aa).

The span at 1–14 (MNRMLSLSVQSQRA) shows a compositional bias: polar residues. The segment at 1–25 (MNRMLSLSVQSQRAPASPSPYGLKI) is disordered.

This is an uncharacterized protein from Treponema pallidum (strain Nichols).